We begin with the raw amino-acid sequence, 737 residues long: 1,4-alpha-glucan branching enzyme GlgB (737 aa).

The active-site Nucleophile is the Asp399. Glu452 (proton donor) is an active-site residue.

This sequence belongs to the glycosyl hydrolase 13 family. GlgB subfamily. Monomer.

The enzyme catalyses Transfers a segment of a (1-&gt;4)-alpha-D-glucan chain to a primary hydroxy group in a similar glucan chain.. It participates in glycan biosynthesis; glycogen biosynthesis. Its function is as follows. Catalyzes the formation of the alpha-1,6-glucosidic linkages in glycogen by scission of a 1,4-alpha-linked oligosaccharide from growing alpha-1,4-glucan chains and the subsequent attachment of the oligosaccharide to the alpha-1,6 position. This chain is 1,4-alpha-glucan branching enzyme GlgB, found in Chlamydia muridarum (strain MoPn / Nigg).